Reading from the N-terminus, the 202-residue chain is MSRYLGSITKKSRRYGFSLLETEREFIKGKKRTYAPGQHGNKRVKLSGYGEQLQEKQKMMYLYGLNDRQFRRTFVIAKHMKGALTLNTFIALESRLDNLVYRMGFAPTRRAARQLVNHGHILLDGKKVTIPSCMVKLEQTIEVAPKSKDLPIVAAGASNTPCKFVDSDLKTKKGKYVRFPERDELPEGINEAYVVEWFNRLV.

Residues serine 94–alanine 157 enclose the S4 RNA-binding domain.

It belongs to the universal ribosomal protein uS4 family. As to quaternary structure, part of the 30S ribosomal subunit. Contacts protein S5. The interaction surface between S4 and S5 is involved in control of translational fidelity.

Functionally, one of the primary rRNA binding proteins, it binds directly to 16S rRNA where it nucleates assembly of the body of the 30S subunit. With S5 and S12 plays an important role in translational accuracy. The polypeptide is Small ribosomal subunit protein uS4 (Malacoplasma penetrans (strain HF-2) (Mycoplasma penetrans)).